The sequence spans 216 residues: ADP-ribosylation factor D (216 aa).

Positions 188 to 204 (SKFSFSNKSKQQKSNSQ) are enriched in low complexity. The interval 188 to 216 (SKFSFSNKSKQQKSNSQPNTPRKNIQMMT) is disordered. The span at 205–216 (PNTPRKNIQMMT) shows a compositional bias: polar residues.

The protein belongs to the small GTPase superfamily. Arf family.

Its subcellular location is the golgi apparatus. Functionally, GTP-binding protein involved in protein trafficking; may modulate vesicle budding and uncoating within the Golgi apparatus. The sequence is that of ADP-ribosylation factor D (arrD) from Dictyostelium discoideum (Social amoeba).